Consider the following 426-residue polypeptide: Serine hydroxymethyltransferase (426 aa).

Residues leucine 113 and 117–119 contribute to the (6S)-5,6,7,8-tetrahydrofolate site; that span reads GHL. Residue lysine 222 is modified to N6-(pyridoxal phosphate)lysine. 363 to 365 is a (6S)-5,6,7,8-tetrahydrofolate binding site; sequence SAF.

This sequence belongs to the SHMT family. Homodimer. Requires pyridoxal 5'-phosphate as cofactor.

The protein resides in the cytoplasm. The enzyme catalyses (6R)-5,10-methylene-5,6,7,8-tetrahydrofolate + glycine + H2O = (6S)-5,6,7,8-tetrahydrofolate + L-serine. It participates in one-carbon metabolism; tetrahydrofolate interconversion. It functions in the pathway amino-acid biosynthesis; glycine biosynthesis; glycine from L-serine: step 1/1. Functionally, catalyzes the reversible interconversion of serine and glycine with tetrahydrofolate (THF) serving as the one-carbon carrier. This reaction serves as the major source of one-carbon groups required for the biosynthesis of purines, thymidylate, methionine, and other important biomolecules. Also exhibits THF-independent aldolase activity toward beta-hydroxyamino acids, producing glycine and aldehydes, via a retro-aldol mechanism. The sequence is that of Serine hydroxymethyltransferase from Porphyromonas gingivalis (strain ATCC 33277 / DSM 20709 / CIP 103683 / JCM 12257 / NCTC 11834 / 2561).